We begin with the raw amino-acid sequence, 108 residues long: Glutaredoxin 4 (108 aa).

The region spanning 4 to 106 (FQKIKKQIQD…KLILKVKKKY (103 aa)) is the Glutaredoxin domain. Position 21 (Lys21) interacts with glutathione. [2Fe-2S] cluster is bound at residue Cys29. Residues Arg58, Phe70, and 83–84 (CS) contribute to the glutathione site.

This sequence belongs to the glutaredoxin family. Monothiol subfamily. Homodimer.

It localises to the cytoplasm. Its function is as follows. Monothiol glutaredoxin involved in the biogenesis of iron-sulfur clusters. The sequence is that of Glutaredoxin 4 (grxD) from Buchnera aphidicola subsp. Acyrthosiphon pisum (strain APS) (Acyrthosiphon pisum symbiotic bacterium).